Here is a 325-residue protein sequence, read N- to C-terminus: Heat-inducible transcription repressor HrcA (325 aa).

This sequence belongs to the HrcA family.

In terms of biological role, negative regulator of class I heat shock genes (grpE-dnaK-dnaJ and groELS operons). Prevents heat-shock induction of these operons. The chain is Heat-inducible transcription repressor HrcA from Staphylococcus aureus (strain MRSA252).